The following is a 210-amino-acid chain: Small ribosomal subunit protein uS3 (210 aa).

Residues 17-86 (IDEFLEKELR…NPQIEVEEIK (70 aa)) enclose the KH type-2 domain.

Belongs to the universal ribosomal protein uS3 family. Part of the 30S ribosomal subunit.

Its function is as follows. Binds the lower part of the 30S subunit head. This is Small ribosomal subunit protein uS3 from Pyrococcus furiosus (strain ATCC 43587 / DSM 3638 / JCM 8422 / Vc1).